Here is a 537-residue protein sequence, read N- to C-terminus: Carbamoyl phosphate synthase large chain, C-terminal section (537 aa).

Positions Met-1–Gly-395 are carbamoyl phosphate synthetic domain. The ATP-grasp domain maps to Arg-122 to Ile-313. Positions 158, 197, 199, 204, 229, 230, 231, 232, 272, and 284 each coordinate ATP. Residues Gln-272, Glu-284, and Asn-286 each coordinate Mg(2+). Mn(2+) is bound by residues Gln-272, Glu-284, and Asn-286. Positions Tyr-396–Ile-537 constitute an MGS-like domain. The allosteric domain stretch occupies residues Tyr-396 to Ile-537.

This sequence belongs to the CarB family. In terms of assembly, composed of two chains; the small (or glutamine) chain promotes the hydrolysis of glutamine to ammonia, which is used by the large (or ammonia) chain to synthesize carbamoyl phosphate. Tetramer of heterodimers (alpha,beta)4. It depends on Mg(2+) as a cofactor. Requires Mn(2+) as cofactor.

It catalyses the reaction hydrogencarbonate + L-glutamine + 2 ATP + H2O = carbamoyl phosphate + L-glutamate + 2 ADP + phosphate + 2 H(+). The catalysed reaction is hydrogencarbonate + NH4(+) + 2 ATP = carbamoyl phosphate + 2 ADP + phosphate + 2 H(+). The protein operates within amino-acid biosynthesis; L-arginine biosynthesis; carbamoyl phosphate from bicarbonate: step 1/1. It participates in pyrimidine metabolism; UMP biosynthesis via de novo pathway; (S)-dihydroorotate from bicarbonate: step 1/3. Large subunit of the glutamine-dependent carbamoyl phosphate synthetase (CPSase). CPSase catalyzes the formation of carbamoyl phosphate from the ammonia moiety of glutamine, carbonate, and phosphate donated by ATP, constituting the first step of 2 biosynthetic pathways, one leading to arginine and/or urea and the other to pyrimidine nucleotides. The large subunit (synthetase) binds the substrates ammonia (free or transferred from glutamine from the small subunit), hydrogencarbonate and ATP and carries out an ATP-coupled ligase reaction, activating hydrogencarbonate by forming carboxy phosphate which reacts with ammonia to form carbamoyl phosphate. This is Carbamoyl phosphate synthase large chain, C-terminal section (carB2) from Aquifex aeolicus (strain VF5).